The sequence spans 1606 residues: Fatty acid synthase apf5 (1606 aa).

One can recognise a Carrier domain in the interval 142–218 (VPVSAILISL…ETLSTSHDGQ (77 aa)). O-(pantetheine 4'-phosphoryl)serine is present on S177. The 544-residue stretch at 996–1539 (KESLIEVALQ…QKGGQALLVH (544 aa)) folds into the Ketosynthase family 3 (KS3) domain. Catalysis depends on for beta-ketoacyl synthase activity residues C1182, H1424, and H1465.

Belongs to the thiolase-like superfamily. Fungal fatty acid synthetase subunit alpha family.

The catalysed reaction is a fatty acyl-[ACP] + malonyl-[ACP] + H(+) = a 3-oxoacyl-[ACP] + holo-[ACP] + CO2. The protein operates within secondary metabolite biosynthesis. Its function is as follows. Fatty acid synthase; part of the gene cluster that mediates the biosynthesis of the cyclic tetrapeptide apicidin F (APF). The non-ribosomal peptide synthetase apf1 incorporates four different amino acids to produce apicidin F: L-phenylalanine, D-pipecolic acid (D-pip), N-methoxy-L-tryptophan and L-2-aminooctanedioic acid. L-Phenylalanine is the only proteinogenic amino acid directly used by apf1. The 3 other apf1 substrates are non-proteinogenic and have to be modified by other enzymes of the cluster. Lysine is converted to delta-1-pyrroline-5-carboxylate (P5C) which is reduced to L-pipecolic acid (L-pip) by apf3. L-pip is epimerized to D-pip, probably by apf1 activity, prior to incorporation. L-Tryptophan is N-oxidyzed by one of the cytochrome P450 monooxygenases (apf7 or apf8), and further methylated at the hydroxy group by the O-methyltransferase apf6 to yield N-methoxy-L-tryptophan. The synthesis of the fourth apf1 substrate is more complex. The fatty acid synthase apf5 is involved in the synthesis of the octanoic acid backbone of L-2-aminooctanedioic acid by fixing one acetyl-CoA unit and three malonyl-CoA units. Then one of the cytochrome P450 monooxygenases (apf7 or apf8) may oxidize this backbone to 2-oxooctanoic acid. The aminotransferase apf4 is predicted to catalyze the exchange of the keto group with an amino group. The next step would be the oxidation of 2-aminooctanoic acid by one of the cytochrome P450 monooxygenases (apf7 or apf8). The last step is the oxidation of 2-amino-8-hydroxyoctanoic acid to 2-aminooctanedioic acid is catalyzed by the FAD-dependent monooxygenase apf9. The sequence is that of Fatty acid synthase apf5 from Gibberella fujikuroi (strain CBS 195.34 / IMI 58289 / NRRL A-6831) (Bakanae and foot rot disease fungus).